The sequence spans 132 residues: Small ribosomal subunit protein uS8c (132 aa).

It belongs to the universal ribosomal protein uS8 family. In terms of assembly, part of the 30S ribosomal subunit.

It localises to the plastid. The protein resides in the chloroplast. One of the primary rRNA binding proteins, it binds directly to 16S rRNA central domain where it helps coordinate assembly of the platform of the 30S subunit. The sequence is that of Small ribosomal subunit protein uS8c (rps8) from Adiantum capillus-veneris (Maidenhair fern).